Reading from the N-terminus, the 287-residue chain is Beta-lactamase GES-5 (287 aa).

A signal peptide spans 1-18 (MRFIHALLLAGIAHSAYA). A disulfide bridge connects residues Cys63 and Cys233. Ser64 acts as the Nucleophile; acyl-ester intermediate in catalysis. Residues Ser64, Ser125, Asn127, Thr230, Thr232, and Arg238 each contribute to the imipenem site.

Belongs to the class-A beta-lactamase family.

It is found in the secreted. It catalyses the reaction a beta-lactam + H2O = a substituted beta-amino acid. Its activity is regulated as follows. Inhibited by the beta-lactamase-blocking agents clavulanic acid, sulbactam and tazobactam, via a covalent binding to Ser-64. In terms of biological role, confers resistance to penicillins, cephalosporins and carbapenems. Has carbapenem-hydrolyzing activity. The polypeptide is Beta-lactamase GES-5 (Klebsiella pneumoniae).